Here is a 236-residue protein sequence, read N- to C-terminus: UPF0177 protein YaiH (236 aa).

A run of 6 helical transmembrane segments spans residues 16–36 (YFSLFILLFAIYWFPDVILGY), 51–71 (ATATWIFLGNMAISLFLGILI), 90–110 (ILFLLFTTIVLFIIYFFTFTY), 131–151 (IVFPFVQFISFAICAPIFEEA), 180–200 (TGANPILIVYLPMSVVLTLIY), and 210–230 (ILVHCLMNALLPTIIVFLQTI).

This sequence belongs to the UPF0177 family.

The protein resides in the cell membrane. This chain is UPF0177 protein YaiH (yaiH), found in Lactococcus lactis subsp. lactis (strain IL1403) (Streptococcus lactis).